The primary structure comprises 506 residues: Lysine--tRNA ligase (506 aa).

Mg(2+) contacts are provided by E416 and E423.

It belongs to the class-II aminoacyl-tRNA synthetase family. In terms of assembly, homodimer. Mg(2+) is required as a cofactor.

The protein resides in the cytoplasm. The enzyme catalyses tRNA(Lys) + L-lysine + ATP = L-lysyl-tRNA(Lys) + AMP + diphosphate. This Bordetella parapertussis (strain 12822 / ATCC BAA-587 / NCTC 13253) protein is Lysine--tRNA ligase.